A 186-amino-acid polypeptide reads, in one-letter code: Mitoferrin-2A (186 aa).

Residues 75–163 (SNVTTHMLAG…FACYEKLKKT (89 aa)) form a Solcar repeat. The next 3 helical transmembrane spans lie at 77 to 96 (VTTHMLAGAVAGVMEHCLMY), 137 to 157 (RGLNVTATGAGPAHALYFACY), and 172 to 185 (GNSHIANGTDYSCP).

Belongs to the mitochondrial carrier (TC 2.A.29) family.

It is found in the mitochondrion inner membrane. The enzyme catalyses Fe(2+)(in) = Fe(2+)(out). In terms of biological role, mitochondrial iron transporter that mediates iron uptake. Probably required for heme synthesis of hemoproteins and Fe-S cluster assembly in non-erythroid cells. This chain is Mitoferrin-2A (slc25a28-a), found in Xenopus laevis (African clawed frog).